The primary structure comprises 440 residues: D-serine dehydratase (440 aa).

At lysine 116 the chain carries N6-(pyridoxal phosphate)lysine.

The protein belongs to the serine/threonine dehydratase family. DsdA subfamily. Monomer. Pyridoxal 5'-phosphate is required as a cofactor.

It carries out the reaction D-serine = pyruvate + NH4(+). This chain is D-serine dehydratase, found in Salmonella enteritidis PT4 (strain P125109).